The primary structure comprises 214 residues: uncharacterized protein (214 aa).

The first 24 residues, 1-24 (MKIWIKAICITSFVIQMSACSSSA), serve as a signal peptide directing secretion. The TNase-like domain maps to 64-197 (ETVKGKVLHI…KEAKAGVWSI (134 aa)). Residues Arg-91, Glu-99, and Arg-142 contribute to the active site.

This is an uncharacterized protein from Bacillus anthracis.